A 149-amino-acid polypeptide reads, in one-letter code: Large ribosomal subunit protein uL15 (149 aa).

The segment at 1-57 (MRLNDPKPKTGSQHRRRRVGRGIAAGQGASCGFGMRGQKSRSGRPTRPGFEGGQNPL) is disordered. Gly residues predominate over residues 23–35 (IAAGQGASCGFGM).

This sequence belongs to the universal ribosomal protein uL15 family. In terms of assembly, part of the 50S ribosomal subunit.

Its function is as follows. Binds to the 23S rRNA. This chain is Large ribosomal subunit protein uL15, found in Acaryochloris marina (strain MBIC 11017).